The following is a 454-amino-acid chain: Light-independent protochlorophyllide reductase subunit N (454 aa).

The [4Fe-4S] cluster site is built by Cys-22, Cys-47, and Cys-107.

It belongs to the BchN/ChlN family. As to quaternary structure, protochlorophyllide reductase is composed of three subunits; ChlL, ChlN and ChlB. Forms a heterotetramer of two ChlB and two ChlN subunits. The cofactor is [4Fe-4S] cluster.

The protein localises to the plastid. It localises to the chloroplast. It carries out the reaction chlorophyllide a + oxidized 2[4Fe-4S]-[ferredoxin] + 2 ADP + 2 phosphate = protochlorophyllide a + reduced 2[4Fe-4S]-[ferredoxin] + 2 ATP + 2 H2O. It functions in the pathway porphyrin-containing compound metabolism; chlorophyll biosynthesis (light-independent). Functionally, component of the dark-operative protochlorophyllide reductase (DPOR) that uses Mg-ATP and reduced ferredoxin to reduce ring D of protochlorophyllide (Pchlide) to form chlorophyllide a (Chlide). This reaction is light-independent. The NB-protein (ChlN-ChlB) is the catalytic component of the complex. In Cycas taitungensis (Prince sago), this protein is Light-independent protochlorophyllide reductase subunit N.